The chain runs to 335 residues: Trans-1,2-dihydrobenzene-1,2-diol dehydrogenase (335 aa).

The protein belongs to the Gfo/Idh/MocA family. Homodimer.

The enzyme catalyses (1R,2R)-1,2-dihydrobenzene-1,2-diol + NADP(+) = catechol + NADPH + H(+). It carries out the reaction D-xylose + NADP(+) = D-xylono-1,5-lactone + NADPH + H(+). The sequence is that of Trans-1,2-dihydrobenzene-1,2-diol dehydrogenase (DHDH) from Bos taurus (Bovine).